Here is a 946-residue protein sequence, read N- to C-terminus: Inter-alpha-trypsin inhibitor heavy chain H2 (946 aa).

Residues methionine 1–glycine 18 form the signal peptide. The propeptide occupies phenylalanine 19–arginine 54. The VIT domain maps to leucine 56–glutamate 185. Serine 60 bears the Phosphoserine; by FAM20C mark. Residue asparagine 118 is glycosylated (N-linked (GlcNAc...) (complex) asparagine). Residues cysteine 261 and cysteine 264 are joined by a disulfide bond. Glutamate 282 and glutamate 283 each carry 4-carboxyglutamate. One can recognise a VWFA domain in the interval proline 308–glutamate 468. A glycan (N-linked (GlcNAc...) asparagine) is linked at asparagine 445. Position 466 is a phosphoserine; by FAM20C (serine 466). An intrachain disulfide couples cysteine 650 to cysteine 651. The O-glycosylated at three sites stretch occupies residues serine 665–serine 679. Threonine 666 carries O-linked (GalNAc...) threonine; partial glycosylation. Serine 673 is a glycosylation site (O-linked (GalNAc...) serine). 2 O-linked (GalNAc...) threonine glycosylation sites follow: threonine 675 and threonine 691. Residue aspartate 702 is modified to Aspartate 1-(chondroitin 4-sulfate)-ester. The propeptide occupies proline 703–proline 946. A Phosphoserine; by FAM20C modification is found at serine 886.

As to quaternary structure, I-alpha-I plasma protease inhibitors are assembled from one or two heavy chains (HC) and one light chain, bikunin. Inter-alpha-inhibitor (I-alpha-I) is composed of ITIH1/HC1, ITIH2/HC2 and bikunin. In terms of processing, heavy chains are linked to bikunin via chondroitin 4-sulfate esterified to the alpha-carboxyl of the C-terminal aspartate after propeptide cleavage. Post-translationally, N- and O-glycosylated. O-glycosylated with core 1 or possibly core 8 glycans. Phosphorylated by FAM20C in the extracellular medium. Plasma.

It localises to the secreted. May act as a carrier of hyaluronan in serum or as a binding protein between hyaluronan and other matrix protein, including those on cell surfaces in tissues to regulate the localization, synthesis and degradation of hyaluronan which are essential to cells undergoing biological processes. The protein is Inter-alpha-trypsin inhibitor heavy chain H2 (ITIH2) of Homo sapiens (Human).